A 301-amino-acid chain; its full sequence is Mitochondrial substrate carrier family protein X (301 aa).

Residues 1–23 (MVQQQQQQQQIKKNQVKPPLYSN) lie on the Mitochondrial intermembrane side of the membrane. 3 Solcar repeats span residues 18–109 (PPLY…FRTR), 117–199 (IKLW…MKHN), and 208–296 (IGLP…QKSF). Residues 24 to 44 (LIAGAIAGVIGSSVVFPLDFV) form a helical membrane-spanning segment. At 45–75 (KTRLQQQRVSIDGSKQYNGIIDCFKKVIKNE) the chain is on the mitochondrial matrix side. The chain crosses the membrane as a helical span at residues 76–97 (GGVRGLYRGLSSNLIGIIPEKA). At 98 to 122 (LKLAMNDYFRTRFQGDRSYIKLWEE) the chain is on the mitochondrial intermembrane side. Residues 123–143 (VASGGLAGMCQVVATNPMELV) form a helical membrane-spanning segment. Topologically, residues 144–173 (KIRMQVSGLSGKKASLKEVVSELGIKGLYK) are mitochondrial matrix. The helical transmembrane segment at 174-194 (GTASTLLRDVPFSMIYFSIYG) threads the bilayer. Over 195–207 (RMKHNLTDQETGE) the chain is Mitochondrial intermembrane. The helical transmembrane segment at 208-228 (IGLPKILLCGITAGSIAASVS) threads the bilayer. At 229–271 (TPFDVIKTRIQVKPGPNDPHYKGIADCFRKTIQSEGPKALFKG) the chain is on the mitochondrial matrix side. A helical transmembrane segment spans residues 272–292 (VLPRVCIISPLFGITLVVYEI). Over 293–301 (QKSFYASTH) the chain is Mitochondrial intermembrane.

This sequence belongs to the mitochondrial carrier (TC 2.A.29) family.

It localises to the mitochondrion inner membrane. Functionally, mitochondrial solute carriers shuttle metabolites, nucleotides, and cofactors through the mitochondrial inner membrane. The protein is Mitochondrial substrate carrier family protein X (mcfX) of Dictyostelium discoideum (Social amoeba).